The chain runs to 76 residues: ATP synthase subunit 9, mitochondrial (76 aa).

Transmembrane regions (helical) follow at residues 14-34 (ISTI…AALI) and 52-72 (ILGF…SFLL).

Belongs to the ATPase C chain family. As to quaternary structure, F-type ATPases have 2 components, CF(1) - the catalytic core - and CF(0) - the membrane proton channel. CF(1) has five subunits: alpha(3), beta(3), gamma(1), delta(1), epsilon(1). CF(0) has three main subunits: a, b and c.

Its subcellular location is the mitochondrion membrane. Mitochondrial membrane ATP synthase (F(1)F(0) ATP synthase or Complex V) produces ATP from ADP in the presence of a proton gradient across the membrane which is generated by electron transport complexes of the respiratory chain. F-type ATPases consist of two structural domains, F(1) - containing the extramembraneous catalytic core and F(0) - containing the membrane proton channel, linked together by a central stalk and a peripheral stalk. During catalysis, ATP synthesis in the catalytic domain of F(1) is coupled via a rotary mechanism of the central stalk subunits to proton translocation. Part of the complex F(0) domain. A homomeric c-ring of probably 10 subunits is part of the complex rotary element. The sequence is that of ATP synthase subunit 9, mitochondrial (ATP9) from Vanderwaltozyma polyspora (strain ATCC 22028 / DSM 70294 / BCRC 21397 / CBS 2163 / NBRC 10782 / NRRL Y-8283 / UCD 57-17) (Kluyveromyces polysporus).